The sequence spans 293 residues: MDNKDEYLLNFKGYNFQKTLVKMEVVENIENYEIRDDDIFIVTYPKSGTIWTQQILSLIYFEGHRNRTENIETIDRAPFFEYNIHKLDYAKMPSPRIFSSHIPYYLVPKGLKDKKAKILYMYRNPKDVLISYFHFSNLMLIFQNPDTVESFMQTFLDGDVVGSLWFDHIRGWYEHRHDFNIMFMSFEDMKKDFRSSVLKICSFLEKELSEEDVDAVVRQATFQKMKADPRANYEHIIKDELGTRNEMGSFLRKGVVGAWKHYLTVDQSERFDKIFHRNMKNIPLKFIWDINEE.

Position 46-51 (46-51 (KSGTIW)) interacts with 3'-phosphoadenylyl sulfate. The active-site Proton acceptor is H101. 3'-phosphoadenylyl sulfate-binding positions include R123, S131, 220-225 (ATFQKM), and 252-254 (RKG).

It belongs to the sulfotransferase 1 family.

It localises to the cytoplasm. It carries out the reaction a primary amine + 3'-phosphoadenylyl sulfate = a sulfamate + adenosine 3',5'-bisphosphate + 2 H(+). Sulfotransferase that utilizes 3'-phospho-5'-adenylyl sulfate (PAPS) as sulfonate donor to catalyze the N-sulfonation of amines. The chain is Amine sulfotransferase (Sult3a1) from Mus musculus (Mouse).